The following is a 330-amino-acid chain: Tyrosine-protein phosphatase yvh1 (330 aa).

The Tyrosine-protein phosphatase domain occupies N45–Q187. C131 acts as the Phosphocysteine intermediate in catalysis.

It belongs to the protein-tyrosine phosphatase family. Non-receptor class dual specificity subfamily.

It is found in the cytoplasm. Its subcellular location is the nucleus. The enzyme catalyses O-phospho-L-tyrosyl-[protein] + H2O = L-tyrosyl-[protein] + phosphate. Functionally, may be directly involved in signal transduction and/or cell cycle regulation. It is necessary for maintaining growth rate or spore germination. Could show both activity toward tyrosine-protein phosphate as well as with serine-protein phosphate. The protein is Tyrosine-protein phosphatase yvh1 (yvh1) of Schizosaccharomyces pombe (strain 972 / ATCC 24843) (Fission yeast).